The sequence spans 254 residues: uncharacterized protein (254 aa).

This is an uncharacterized protein from Acheta domesticus (House cricket).